Reading from the N-terminus, the 143-residue chain is Hemoglobin subunit alpha-2 (143 aa).

Ser-2 carries the post-translational modification N-acetylserine. The Globin domain maps to 2-143; it reads SLSAKDKATV…LALALSEKYR (142 aa). His-60 provides a ligand contact to O2. A heme b-binding site is contributed by His-89.

Belongs to the globin family. In terms of assembly, hb 2 is a heterotetramer of two alpha-2 and two beta-1 chains. Hb 3 is a heterotetramer of two alpha-2 and two beta-2 chains. As to expression, red blood cells.

In terms of biological role, involved in oxygen transport from gills to the various peripheral tissues. The polypeptide is Hemoglobin subunit alpha-2 (hba2) (Boreogadus saida (Polar cod)).